Here is a 162-residue protein sequence, read N- to C-terminus: uncharacterized protein (162 aa).

The first 24 residues, 1 to 24, serve as a signal peptide directing secretion; sequence MKRGVATLPVILVILLSVAAGAGA.

This is an uncharacterized protein from Mycobacterium bovis (strain ATCC BAA-935 / AF2122/97).